The chain runs to 342 residues: Tetraacyldisaccharide 4'-kinase (342 aa).

Residue 68–75 participates in ATP binding; the sequence is TVGGTGKT.

It belongs to the LpxK family.

It catalyses the reaction a lipid A disaccharide + ATP = a lipid IVA + ADP + H(+). The protein operates within glycolipid biosynthesis; lipid IV(A) biosynthesis; lipid IV(A) from (3R)-3-hydroxytetradecanoyl-[acyl-carrier-protein] and UDP-N-acetyl-alpha-D-glucosamine: step 6/6. In terms of biological role, transfers the gamma-phosphate of ATP to the 4'-position of a tetraacyldisaccharide 1-phosphate intermediate (termed DS-1-P) to form tetraacyldisaccharide 1,4'-bis-phosphate (lipid IVA). This Burkholderia cenocepacia (strain HI2424) protein is Tetraacyldisaccharide 4'-kinase.